A 667-amino-acid polypeptide reads, in one-letter code: DNA ligase (667 aa).

Residues 34–38 (DAEYD), 83–84 (SL), and glutamate 113 each bind NAD(+). Lysine 115 (N6-AMP-lysine intermediate) is an active-site residue. Residues arginine 136, glutamate 170, lysine 286, and lysine 310 each contribute to the NAD(+) site. Cysteine 404, cysteine 407, cysteine 422, and cysteine 427 together coordinate Zn(2+). One can recognise a BRCT domain in the interval 589–667 (ATDSVLSGKT…EQQLEDVVGK (79 aa)).

This sequence belongs to the NAD-dependent DNA ligase family. LigA subfamily. Requires Mg(2+) as cofactor. The cofactor is Mn(2+).

The catalysed reaction is NAD(+) + (deoxyribonucleotide)n-3'-hydroxyl + 5'-phospho-(deoxyribonucleotide)m = (deoxyribonucleotide)n+m + AMP + beta-nicotinamide D-nucleotide.. DNA ligase that catalyzes the formation of phosphodiester linkages between 5'-phosphoryl and 3'-hydroxyl groups in double-stranded DNA using NAD as a coenzyme and as the energy source for the reaction. It is essential for DNA replication and repair of damaged DNA. The chain is DNA ligase from Oceanobacillus iheyensis (strain DSM 14371 / CIP 107618 / JCM 11309 / KCTC 3954 / HTE831).